Here is a 131-residue protein sequence, read N- to C-terminus: D-ribose pyranase (131 aa).

The active-site Proton donor is the His20. Substrate contacts are provided by residues Asp28, His98, and Tyr120–Asn122.

It belongs to the RbsD / FucU family. RbsD subfamily. As to quaternary structure, homodecamer.

The protein resides in the cytoplasm. The catalysed reaction is beta-D-ribopyranose = beta-D-ribofuranose. It functions in the pathway carbohydrate metabolism; D-ribose degradation; D-ribose 5-phosphate from beta-D-ribopyranose: step 1/2. Its function is as follows. Catalyzes the interconversion of beta-pyran and beta-furan forms of D-ribose. The chain is D-ribose pyranase from Enterococcus faecalis (strain ATCC 700802 / V583).